Here is a 419-residue protein sequence, read N- to C-terminus: Multidrug efflux pump Tap (419 aa).

12 consecutive transmembrane segments (helical) span residues 7 to 29, 44 to 66, 73 to 95, 100 to 122, 149 to 171, 175 to 197, 218 to 240, 260 to 282, 289 to 308, 313 to 335, 348 to 370, and 375 to 397; these read GPAF…SIVA, ASIV…GTAV, RVSM…VAWG, AVNV…AGMT, ILNL…VGGI, WITA…EGAG, FVWN…ALYL, LGWA…AVLA, VTMS…IAFL, VIMV…YNYV, VVGV…AGPL, and GLHA…AIRL.

It belongs to the major facilitator superfamily. Drug:H(+) antiporter-3 (DHA3) (TC 2.A.1.21) family.

It localises to the cell inner membrane. Inhibited by piperine, verapamil and verapamil analogs. Functionally, efflux pump that contributes to intrinsic antibiotic resistance. The pump uses the electrochemical gradient as a source of energy. Confers resistance to rifampicin. Confers low-level resistance to tetracycline and to several aminoglycosides, including streptomycin, gentamicin, 2'-N-ethylnetilmicin and 6'-N-ethylnetilmicin. The protein is Multidrug efflux pump Tap of Mycobacterium tuberculosis (strain ATCC 25618 / H37Rv).